Reading from the N-terminus, the 356-residue chain is Protein RecA (356 aa).

75–82 (GPESSGKT) is a binding site for ATP.

Belongs to the RecA family.

Its subcellular location is the cytoplasm. Can catalyze the hydrolysis of ATP in the presence of single-stranded DNA, the ATP-dependent uptake of single-stranded DNA by duplex DNA, and the ATP-dependent hybridization of homologous single-stranded DNAs. It interacts with LexA causing its activation and leading to its autocatalytic cleavage. In Burkholderia mallei (strain ATCC 23344), this protein is Protein RecA.